Consider the following 318-residue polypeptide: Probable pyridoxal 5'-phosphate synthase subunit PDX1.1 (318 aa).

Asp49 provides a ligand contact to D-ribose 5-phosphate. The Schiff-base intermediate with D-ribose 5-phosphate role is filled by Lys106. Position 178 (Gly178) interacts with D-ribose 5-phosphate. Arg190 is a D-glyceraldehyde 3-phosphate binding site. D-ribose 5-phosphate is bound by residues Gly239 and 260–261 (GS).

Belongs to the PdxS/SNZ family.

The catalysed reaction is aldehydo-D-ribose 5-phosphate + D-glyceraldehyde 3-phosphate + L-glutamine = pyridoxal 5'-phosphate + L-glutamate + phosphate + 3 H2O + H(+). Its pathway is cofactor biosynthesis; pyridoxal 5'-phosphate biosynthesis. Its function is as follows. Catalyzes the formation of pyridoxal 5'-phosphate from ribose 5-phosphate (RBP), glyceraldehyde 3-phosphate (G3P) and ammonia. The ammonia is provided by PDX2. Can also use ribulose 5-phosphate and dihydroxyacetone phosphate as substrates, resulting from enzyme-catalyzed isomerization of RBP and G3P, respectively. Also plays an indirect role in resistance to singlet oxygen-generating photosensitizers. The sequence is that of Probable pyridoxal 5'-phosphate synthase subunit PDX1.1 (PDX11) from Oryza sativa subsp. japonica (Rice).